A 126-amino-acid chain; its full sequence is Aspartate 1-decarboxylase (126 aa).

Residue Ser25 is the Schiff-base intermediate with substrate; via pyruvic acid of the active site. Residue Ser25 is modified to Pyruvic acid (Ser). Thr57 contacts substrate. Residue Tyr58 is the Proton donor of the active site. 73 to 75 lines the substrate pocket; the sequence is GGA.

Belongs to the PanD family. In terms of assembly, heterooctamer of four alpha and four beta subunits. It depends on pyruvate as a cofactor. Post-translationally, is synthesized initially as an inactive proenzyme, which is activated by self-cleavage at a specific serine bond to produce a beta-subunit with a hydroxyl group at its C-terminus and an alpha-subunit with a pyruvoyl group at its N-terminus.

It localises to the cytoplasm. It carries out the reaction L-aspartate + H(+) = beta-alanine + CO2. It participates in cofactor biosynthesis; (R)-pantothenate biosynthesis; beta-alanine from L-aspartate: step 1/1. Catalyzes the pyruvoyl-dependent decarboxylation of aspartate to produce beta-alanine. In Stenotrophomonas maltophilia (strain K279a), this protein is Aspartate 1-decarboxylase.